A 124-amino-acid chain; its full sequence is Fluoride-specific ion channel FluC (124 aa).

4 consecutive transmembrane segments (helical) span residues 4-24 (VLFVALGGSIGAVLRYLISLL), 35-55 (FGTLVVNILGSFLMGVIFALG), 62-82 (PEFKAFIGVGMLGALTTFSTF), and 95-115 (LVKAVFNVVVNVGVCIFVVYL). Na(+) contacts are provided by G74 and T77.

Belongs to the fluoride channel Fluc/FEX (TC 1.A.43) family.

The protein resides in the cell inner membrane. It catalyses the reaction fluoride(in) = fluoride(out). Its activity is regulated as follows. Na(+) is not transported, but it plays an essential structural role and its presence is essential for fluoride channel function. Fluoride-specific ion channel. Important for reducing fluoride concentration in the cell, thus reducing its toxicity. This chain is Fluoride-specific ion channel FluC, found in Shewanella pealeana (strain ATCC 700345 / ANG-SQ1).